The following is a 116-amino-acid chain: Alpha-amylase inhibitor 5 (116 aa).

Disulfide bonds link C4–C55, C18–C44, C27–C77, C45–C95, and C57–C106.

It belongs to the protease inhibitor I6 (cereal trypsin/alpha-amylase inhibitor) family.

Its subcellular location is the secreted. Its function is as follows. Alpha-amylase inhibitor. The polypeptide is Alpha-amylase inhibitor 5 (Sorghum bicolor (Sorghum)).